The following is a 307-amino-acid chain: Ornithine carbamoyltransferase (307 aa).

Carbamoyl phosphate is bound by residues 50–53 (STRT), glutamine 77, arginine 101, and 128–131 (HPCQ). L-ornithine contacts are provided by residues asparagine 160, aspartate 224, and 228–229 (SM). Carbamoyl phosphate is bound by residues 264-265 (CL) and arginine 292.

This sequence belongs to the aspartate/ornithine carbamoyltransferase superfamily. OTCase family.

It is found in the cytoplasm. The catalysed reaction is carbamoyl phosphate + L-ornithine = L-citrulline + phosphate + H(+). Its pathway is amino-acid biosynthesis; L-arginine biosynthesis; L-arginine from L-ornithine and carbamoyl phosphate: step 1/3. Reversibly catalyzes the transfer of the carbamoyl group from carbamoyl phosphate (CP) to the N(epsilon) atom of ornithine (ORN) to produce L-citrulline. This Clavibacter sepedonicus (Clavibacter michiganensis subsp. sepedonicus) protein is Ornithine carbamoyltransferase.